The following is a 404-amino-acid chain: Serine/threonine-protein phosphatase 2A regulatory subunit rsa-1 (404 aa).

Part of a complex consisting of a common heterodimeric core enzyme, composed of catalytic subunit let-92 and constant regulatory subunit paa-1, that associates with a variety of regulatory subunits which confer distinct properties to the holoenzyme. Interacts with rsa-2, spd-5 and tpxl-1.

The protein resides in the cytoplasm. It is found in the cytoskeleton. It localises to the microtubule organizing center. Its subcellular location is the centrosome. In terms of biological role, regulatory subunit of phosphatase let-92 which recruits let-92/paa-1 complex to the centrosomes, thereby regulating microtubule outgrowth from centrosomes and mitotic spindle assembly ensuring the stability of kinetochore microtubules. This is Serine/threonine-protein phosphatase 2A regulatory subunit rsa-1 from Caenorhabditis elegans.